We begin with the raw amino-acid sequence, 540 residues long: Na(+)/H(+) antiporter NhaS2 (540 aa).

The next 10 helical transmembrane spans lie at 29–49 (ITTL…VALV), 71–91 (GLSV…ILIF), 117–137 (VVIS…LAWV), 138–158 (TAAG…IAAF), 207–227 (IFVA…LCVG), 256–276 (LGVS…NLAL), 296–316 (FGVN…SILL), 323–343 (LIAI…LLYL), 358–378 (VLIA…ALPL), and 389–409 (LVFS…PWVV).

The protein belongs to the monovalent cation:proton antiporter 1 (CPA1) transporter (TC 2.A.36) family.

The protein resides in the cell membrane. Its function is as follows. Required for Na(+) uptake into the cell, especially at low external Na(+) concentrations or low Na(+)/K(+) ratios. May be part of a sodium cycle that permits re-entry of sodium into the cell. The polypeptide is Na(+)/H(+) antiporter NhaS2 (nhaS2) (Synechocystis sp. (strain ATCC 27184 / PCC 6803 / Kazusa)).